A 122-amino-acid chain; its full sequence is Large ribosomal subunit protein uL14 (122 aa).

It belongs to the universal ribosomal protein uL14 family. Part of the 50S ribosomal subunit. Forms a cluster with proteins L3 and L19. In the 70S ribosome, L14 and L19 interact and together make contacts with the 16S rRNA in bridges B5 and B8.

Functionally, binds to 23S rRNA. Forms part of two intersubunit bridges in the 70S ribosome. This is Large ribosomal subunit protein uL14 from Chlamydia trachomatis serovar A (strain ATCC VR-571B / DSM 19440 / HAR-13).